The sequence spans 501 residues: Glycerol kinase (501 aa).

Residue T14 participates in ADP binding. ATP-binding residues include T14, T15, and S16. T14 contacts sn-glycerol 3-phosphate. R18 provides a ligand contact to ADP. The sn-glycerol 3-phosphate site is built by R84, E85, Y136, and D246. The glycerol site is built by R84, E85, Y136, D246, and Q247. Residues T268 and G311 each contribute to the ADP site. Residues T268, G311, Q315, and G412 each coordinate ATP. ADP-binding residues include G412 and N416.

It belongs to the FGGY kinase family. Homotetramer and homodimer (in equilibrium).

It catalyses the reaction glycerol + ATP = sn-glycerol 3-phosphate + ADP + H(+). The protein operates within polyol metabolism; glycerol degradation via glycerol kinase pathway; sn-glycerol 3-phosphate from glycerol: step 1/1. With respect to regulation, activated by phosphorylation and inhibited by fructose 1,6-bisphosphate (FBP). Key enzyme in the regulation of glycerol uptake and metabolism. Catalyzes the phosphorylation of glycerol to yield sn-glycerol 3-phosphate. This is Glycerol kinase from Desulforamulus reducens (strain ATCC BAA-1160 / DSM 100696 / MI-1) (Desulfotomaculum reducens).